The sequence spans 385 residues: UDP-N-acetylglucosamine--N-acetylmuramyl-(pentapeptide) pyrophosphoryl-undecaprenol N-acetylglucosamine transferase (385 aa).

UDP-N-acetyl-alpha-D-glucosamine is bound by residues 24–26 (TAG), Asn143, Arg180, Ser214, and Gln310.

This sequence belongs to the glycosyltransferase 28 family. MurG subfamily.

The protein resides in the cell membrane. The enzyme catalyses di-trans,octa-cis-undecaprenyl diphospho-N-acetyl-alpha-D-muramoyl-L-alanyl-D-glutamyl-meso-2,6-diaminopimeloyl-D-alanyl-D-alanine + UDP-N-acetyl-alpha-D-glucosamine = di-trans,octa-cis-undecaprenyl diphospho-[N-acetyl-alpha-D-glucosaminyl-(1-&gt;4)]-N-acetyl-alpha-D-muramoyl-L-alanyl-D-glutamyl-meso-2,6-diaminopimeloyl-D-alanyl-D-alanine + UDP + H(+). It functions in the pathway cell wall biogenesis; peptidoglycan biosynthesis. Functionally, cell wall formation. Catalyzes the transfer of a GlcNAc subunit on undecaprenyl-pyrophosphoryl-MurNAc-pentapeptide (lipid intermediate I) to form undecaprenyl-pyrophosphoryl-MurNAc-(pentapeptide)GlcNAc (lipid intermediate II). The polypeptide is UDP-N-acetylglucosamine--N-acetylmuramyl-(pentapeptide) pyrophosphoryl-undecaprenol N-acetylglucosamine transferase (Mycolicibacterium smegmatis (strain ATCC 700084 / mc(2)155) (Mycobacterium smegmatis)).